A 464-amino-acid polypeptide reads, in one-letter code: tRNA(Ile2) 2-agmatinylcytidine synthetase TiaS (464 aa).

Belongs to the TiaS family.

It is found in the cytoplasm. The catalysed reaction is cytidine(34) in tRNA(Ile2) + agmatine + ATP + H2O = 2-agmatinylcytidine(34) in tRNA(Ile2) + AMP + 2 phosphate + 2 H(+). Its function is as follows. ATP-dependent agmatine transferase that catalyzes the formation of 2-agmatinylcytidine (agm2C) at the wobble position (C34) of tRNA(Ile2), converting the codon specificity from AUG to AUA. The polypeptide is tRNA(Ile2) 2-agmatinylcytidine synthetase TiaS (Ignisphaera aggregans (strain DSM 17230 / JCM 13409 / AQ1.S1)).